The following is an 815-amino-acid chain: Leucine--tRNA ligase (815 aa).

Residues 40 to 50 carry the 'HIGH' region motif; that stretch reads PYPSGRIHMGH. The 'KMSKS' region signature appears at 583-587; the sequence is KMSKS. Residue Lys-586 coordinates ATP.

Belongs to the class-I aminoacyl-tRNA synthetase family.

It localises to the cytoplasm. The enzyme catalyses tRNA(Leu) + L-leucine + ATP = L-leucyl-tRNA(Leu) + AMP + diphosphate. The sequence is that of Leucine--tRNA ligase from Nitratiruptor sp. (strain SB155-2).